Here is a 508-residue protein sequence, read N- to C-terminus: Flagellin (508 aa).

It belongs to the bacterial flagellin family.

The protein localises to the secreted. Its subcellular location is the bacterial flagellum. Flagellin is the subunit protein which polymerizes to form the filaments of bacterial flagella. The chain is Flagellin (fliC) from Salmonella berta.